The chain runs to 248 residues: UPF0280 protein Maeo_0343 (248 aa).

This sequence belongs to the UPF0280 family.

This chain is UPF0280 protein Maeo_0343, found in Methanococcus aeolicus (strain ATCC BAA-1280 / DSM 17508 / OCM 812 / Nankai-3).